We begin with the raw amino-acid sequence, 716 residues long: ATP-dependent DNA helicase DinG (716 aa).

Positions 17-294 constitute a Helicase ATP-binding domain; it reads ALQEQIPDFI…TCMEQFRPKT (278 aa). 54 to 61 is an ATP binding site; it reads APTGVGKT. Cys120 lines the [4Fe-4S] cluster pocket. Residues 131–134 carry the DEAH box motif; that stretch reads EPTQ. Positions 194, 199, and 205 each coordinate [4Fe-4S] cluster. The DEAH box motif lies at 248-251; sequence DEGH. The Helicase C-terminal domain occupies 487 to 698; it reads ALDSPFNHCE…VFPIEQPEVP (212 aa).

Belongs to the helicase family. DinG subfamily. Type 1 sub-subfamily. [4Fe-4S] cluster is required as a cofactor.

It catalyses the reaction Couples ATP hydrolysis with the unwinding of duplex DNA at the replication fork by translocating in the 5'-3' direction. This creates two antiparallel DNA single strands (ssDNA). The leading ssDNA polymer is the template for DNA polymerase III holoenzyme which synthesizes a continuous strand.. It carries out the reaction ATP + H2O = ADP + phosphate + H(+). Functionally, DNA-dependent ATPase and 5'-3' DNA helicase. Unwinds D-loops, R-loops, forked DNA and G-quadruplex DNA. This chain is ATP-dependent DNA helicase DinG, found in Shigella flexneri.